Reading from the N-terminus, the 279-residue chain is S-methyl-5'-thioadenosine phosphorylase (279 aa).

Phosphate contacts are provided by residues Ser-13, 55-56 (RH), and 88-89 (TA). Substrate is bound at residue Met-191. Residue Thr-192 participates in phosphate binding. 215–217 (DYD) lines the substrate pocket.

It belongs to the PNP/MTAP phosphorylase family. MTAP subfamily. As to quaternary structure, homotrimer.

The protein resides in the cytoplasm. The protein localises to the nucleus. The enzyme catalyses S-methyl-5'-thioadenosine + phosphate = 5-(methylsulfanyl)-alpha-D-ribose 1-phosphate + adenine. Its pathway is amino-acid biosynthesis; L-methionine biosynthesis via salvage pathway; S-methyl-5-thio-alpha-D-ribose 1-phosphate from S-methyl-5'-thioadenosine (phosphorylase route): step 1/1. In terms of biological role, catalyzes the reversible phosphorylation of S-methyl-5'-thioadenosine (MTA) to adenine and 5-methylthioribose-1-phosphate. Involved in the breakdown of MTA, a major by-product of polyamine biosynthesis. Responsible for the first step in the methionine salvage pathway after MTA has been generated from S-adenosylmethionine. Has broad substrate specificity with 6-aminopurine nucleosides as preferred substrates. This is S-methyl-5'-thioadenosine phosphorylase from Anopheles darlingi (Mosquito).